Consider the following 293-residue polypeptide: MKKHKMLSLLAVSGLMGIGILAGCSNDSSSSSKGTINIVSREEGSGTRGAFIELFGIESKNKKGEKVDHTSDAATVTNSTSVMLTTVSKDPSAIGYSSLGSLNSSVKVLKIDGKNATVKDIKSGSYKISRPFNIVTKEGKEKEATKDFIDYILSKDGQAVVEKNGYIPLDNAKAYQAKVSSGKVVIAGSSSVTPVMEKIKEAYHKVNAKVDVEIQQSDSSTGITSAIDGSADIGMASRELDKTESSKGVKATVIATDGIAVVVNKKNKVNDLSTKQVKDIFTGKTTSWSDLSK.

The N-terminal stretch at M1–G23 is a signal peptide. The N-palmitoyl cysteine moiety is linked to residue C24. The S-diacylglycerol cysteine moiety is linked to residue C24.

The protein belongs to the PstS family. In terms of assembly, the complex is composed of two ATP-binding proteins (PstB), two transmembrane proteins (PstC and PstA) and a solute-binding protein (PstS).

It is found in the cell membrane. Its function is as follows. Part of the ABC transporter complex PstSACB involved in phosphate import. This is Phosphate-binding protein PstS 2 (pstS2) from Streptococcus agalactiae serotype III (strain NEM316).